The primary structure comprises 66 residues: Beta-toxin Chui3 (66 aa).

Positions Lys-1–Arg-66 constitute an LCN-type CS-alpha/beta domain. 4 cysteine pairs are disulfide-bonded: Cys-12-Cys-65, Cys-16-Cys-41, Cys-25-Cys-46, and Cys-29-Cys-48.

Belongs to the long (4 C-C) scorpion toxin superfamily. Sodium channel inhibitor family. Beta subfamily. Expressed by the venom gland.

Its subcellular location is the secreted. Functionally, beta toxins bind voltage-independently at site-4 of sodium channels (Nav) and shift the voltage of activation toward more negative potentials thereby affecting sodium channel activation and promoting spontaneous and repetitive firing. Acts on human sodium channel Nav1.6/SCN8A. The protein is Beta-toxin Chui3 of Centruroides huichol (Scorpion).